The following is a 183-amino-acid chain: Non-specific lipid transfer protein GPI-anchored 15 (183 aa).

An N-terminal signal peptide occupies residues 1–24 (MGYRRSYAITFVALVAALWSVTKA). Disulfide bonds link Cys-30-Cys-71, Cys-40-Cys-55, Cys-56-Cys-97, and Cys-69-Cys-107. N-linked (GlcNAc...) asparagine glycans are attached at residues Asn-47 and Asn-86. Residues 108–158 (NAATGPTAQPPAPSPTEKTPDVTLTPTSLPGARSGVGGGSKTVPSVGTGSS) form a disordered region. Residues 149–158 (TVPSVGTGSS) show a composition bias toward polar residues. Residue Ser-158 is the site of GPI-anchor amidated serine attachment. Residues 159-183 (SRNVDPLPLHFLMFAVLVVCTSSFL) constitute a propeptide, removed in mature form.

The protein belongs to the plant LTP family. As to expression, expressed in seedlings, preferentially in the endodermis of hypocotyls and roots. Also observed in siliques.

It localises to the cell membrane. Probable lipid transfer protein. The polypeptide is Non-specific lipid transfer protein GPI-anchored 15 (Arabidopsis thaliana (Mouse-ear cress)).